We begin with the raw amino-acid sequence, 100 residues long: Vesicle-associated membrane protein 3 (100 aa).

S2 carries the N-acetylserine modification. The Cytoplasmic portion of the chain corresponds to 2–77 (STGPTAATGS…KRKYWWKNCK (76 aa)). In terms of domain architecture, v-SNARE coiled-coil homology spans 14 to 74 (RLQQTQNQVD…AKLKRKYWWK (61 aa)). Residues K66, K68, and K77 each participate in a glycyl lysine isopeptide (Lys-Gly) (interchain with G-Cter in ubiquitin) cross-link. A helical; Anchor for type IV membrane protein transmembrane segment spans residues 78–98 (MWAIGITVLVIFIIIIIVWVV). Topologically, residues 99 to 100 (SS) are vesicular.

Belongs to the synaptobrevin family. As to quaternary structure, interacts with POPDC1 (via the C-terminus cytoplasmic tail). Interacts with BCAP31; involved in VAMP3 export from the endoplasmic reticulum. Interacts with BAIAP3; this interaction is increased in the presence of calcium. Interacts with PICALM. Ubiquitinated by RNF167 at Lys-66, Lys-68 and Lys-77, regulating the recycling endosome pathway. In terms of processing, (Microbial infection) Targeted and hydrolyzed by C.botulinum neurotoxin type B (BoNT/B, botB) which hydrolyzes the 59-Gln-|-Phe-60 bond and probably inhibits neurotransmitter release. Post-translationally, (Microbial infection) Targeted and hydrolyzed by C.botulinum neurotoxin type D (BoNT/D, botD) which hydrolyzes the 42-Lys-|-Leu-43 bond and probably inhibits neurotransmitter release. Note that humans are not known to be infected by C.botulinum type D. (Microbial infection) Targeted and hydrolyzed by C.botulinum neurotoxin type F (BoNT/F, botF) which hydrolyzes the 41-Gln-|-Lys-42 bond and probably inhibits neurotransmitter release.

It is found in the early endosome membrane. Its subcellular location is the recycling endosome membrane. The protein localises to the synapse. The protein resides in the synaptosome. In terms of biological role, SNARE involved in vesicular transport from the late endosomes to the trans-Golgi network. The sequence is that of Vesicle-associated membrane protein 3 (VAMP3) from Homo sapiens (Human).